The sequence spans 142 residues: Universal stress protein G (142 aa).

Belongs to the universal stress protein A family.

The polypeptide is Universal stress protein G (uspG) (Shigella flexneri).